Consider the following 222-residue polypeptide: Probable GTP-binding protein EngB (222 aa).

In terms of domain architecture, EngB-type G spans 22-197 (TSAEIAFVGR…ETVVAGWFAG (176 aa)). Mg(2+) is bound by residues Ser-37 and Thr-59. Positions 201-222 (RQADELTDGEPDDRTPDPDSAS) are disordered. Basic and acidic residues predominate over residues 212–222 (DDRTPDPDSAS).

This sequence belongs to the TRAFAC class TrmE-Era-EngA-EngB-Septin-like GTPase superfamily. EngB GTPase family. Mg(2+) is required as a cofactor.

Functionally, necessary for normal cell division and for the maintenance of normal septation. This chain is Probable GTP-binding protein EngB, found in Laribacter hongkongensis (strain HLHK9).